The sequence spans 151 residues: uncharacterized protein (151 aa).

The protein to B.subtilis pcf and to sigma factors.

This is an uncharacterized protein from Bacillus subtilis (strain 168).